Reading from the N-terminus, the 668-residue chain is MDPSADTWDLSSPLISLWINRFYIYLGFAVSISLWICVQIVIEMQGFATVLAEAVTSLDLPVAIINLKEYDPDDHLIEEVTSKNVCVFLVATYTDGLPTESAEWFCKWLEEASIDFRFGKTYLKGMRDAVFGLGNSAYASHFNKVGKNVDKWLWMLGVHRVMSRGEGDCDVVKSKHGSIEANFRAWKTKFISQLQALQKGERKKSCGGHCKKGKCESHQHGSEEREEGSQEQDELHHRDTKEEEPFESSSEEEFGGEDHQSLNSIVDVEDLGKIMDHVKKEKREKEQQEEKSGLFRNMGRNEDGERRAMITPALREALTKQVDAPRERSLLQTHILWNESHRCMETTPSLACANKCVFCWWHHNNPVGTEWLWKMDQPEMILKEAIENHQNMIKQFKGVPGVKAERFEEGMTVKHCALSLVGEPIMYPEINRFLKLLHQCKISSFLVTNAQFPAEIRNLEPVTQLYVSVDASTKDSLKKIDRPLFKDFWQQFLDSLKALAVKQQRTVYRLMLVKAWNVDELQAYAQLVSLGNPDFIEVKGVTYCRESSASSLTMAHVPWHEEVVQFVRELVDLIPEYEIACEHEHSNCLLIAHRKFKIGGEWWTWIDYNRFQELIQEYEDSGGSKTFSAKDYMARTPHWALFGANERSFDPKDTRHQRKNKSKAISGC.

The 155-residue stretch at 37–191 (CVQIVIEMQG…NFRAWKTKFI (155 aa)) folds into the Flavodoxin-like domain. FMN contacts are provided by residues 43-47 (EMQGF) and 130-162 (VFGLGNSAYASHFNKVGKNVDKWLWMLGVHRVM). Residues 202 to 269 (RKKSCGGHCK…QSLNSIVDVE (68 aa)) form a disordered region. Basic and acidic residues-rich tracts occupy residues 213–223 (GKCESHQHGSE) and 233–243 (DELHHRDTKEE). The span at 244-255 (EPFESSSEEEFG) shows a compositional bias: acidic residues. The region spanning 336-580 (LWNESHRCME…VDLIPEYEIA (245 aa)) is the Radical SAM core domain. [4Fe-4S] cluster-binding residues include cysteine 352, cysteine 356, and cysteine 359.

Belongs to the TYW1 family. It depends on [4Fe-4S] cluster as a cofactor.

It catalyses the reaction N(1)-methylguanosine(37) in tRNA(Phe) + pyruvate + S-adenosyl-L-methionine = 4-demethylwyosine(37) in tRNA(Phe) + 5'-deoxyadenosine + L-methionine + CO2 + H2O. The protein operates within tRNA modification; wybutosine-tRNA(Phe) biosynthesis. Probable component of the wybutosine biosynthesis pathway. Wybutosine is a hyper modified guanosine with a tricyclic base found at the 3'-position adjacent to the anticodon of eukaryotic phenylalanine tRNA. Catalyzes the condensation of N-methylguanine with 2 carbon atoms from pyruvate to form the tricyclic 4-demethylwyosine, an intermediate in wybutosine biosynthesis. In Homo sapiens (Human), this protein is S-adenosyl-L-methionine-dependent tRNA 4-demethylwyosine synthase TYW1B (TYW1B).